A 150-amino-acid polypeptide reads, in one-letter code: Arginine repressor (150 aa).

This sequence belongs to the ArgR family.

Its subcellular location is the cytoplasm. The protein operates within amino-acid biosynthesis; L-arginine biosynthesis [regulation]. Its function is as follows. Regulates arginine biosynthesis genes. The protein is Arginine repressor of Halothermothrix orenii (strain H 168 / OCM 544 / DSM 9562).